We begin with the raw amino-acid sequence, 367 residues long: Aminomethyltransferase (367 aa).

The protein belongs to the GcvT family. In terms of assembly, the glycine cleavage system is composed of four proteins: P, T, L and H.

It catalyses the reaction N(6)-[(R)-S(8)-aminomethyldihydrolipoyl]-L-lysyl-[protein] + (6S)-5,6,7,8-tetrahydrofolate = N(6)-[(R)-dihydrolipoyl]-L-lysyl-[protein] + (6R)-5,10-methylene-5,6,7,8-tetrahydrofolate + NH4(+). In terms of biological role, the glycine cleavage system catalyzes the degradation of glycine. This chain is Aminomethyltransferase, found in Mycobacterium bovis (strain ATCC BAA-935 / AF2122/97).